A 175-amino-acid polypeptide reads, in one-letter code: Gamma-crystallin M1 (175 aa).

4 Beta/gamma crystallin 'Greek key' domains span residues 2–40 (GKII…RVES), 41–86 (GCFM…RYPY), 89–121 (FRMR…RMSD), and 130–172 (GHWL…RRIT).

This sequence belongs to the beta/gamma-crystallin family. Monomer.

Functionally, crystallins are the dominant structural components of the vertebrate eye lens. This is Gamma-crystallin M1 (GM1) from Chiloscyllium indicum (Slender bamboo shark).